Consider the following 194-residue polypeptide: AP-3 complex subunit sigma (194 aa).

This sequence belongs to the adaptor complexes small subunit family. As to quaternary structure, adaptor protein complex 3 (AP-3) is a heterotetramer composed of 2 large adaptins (APL5 and APL6), a medium adaptin (APM3) and a small adaptin (APS3).

It is found in the golgi apparatus. It localises to the cytoplasmic vesicle membrane. Part of the AP-3 complex, an adaptor-related complex which is not clathrin-associated. The complex is associated with the Golgi region as well as more peripheral structures. It facilitates the budding of vesicles from the Golgi membrane and may be directly involved in trafficking to the vacuole. Required for the transport via the ALP pathway, which directs the transport of the cargo proteins PHO8 and VAM3 to the vacuole. This Saccharomyces cerevisiae (strain ATCC 204508 / S288c) (Baker's yeast) protein is AP-3 complex subunit sigma (APS3).